We begin with the raw amino-acid sequence, 600 residues long: FERM domain-containing protein 3 (600 aa).

The FERM domain maps to 31–311 (MRCTIRLLDD…ENQAFYKYAK (281 aa)). The disordered stretch occupies residues 413-440 (SAPVLGNSPARGLETTADVTHDEEESIR). Residues 534-554 (LLLAAIGLLMVVLPLLLILLE) form a helical membrane-spanning segment.

It localises to the membrane. This chain is FERM domain-containing protein 3 (frmd3), found in Xenopus tropicalis (Western clawed frog).